We begin with the raw amino-acid sequence, 892 residues long: Alanine--tRNA ligase (892 aa).

The Zn(2+) site is built by His-596, His-600, Cys-700, and His-704.

This sequence belongs to the class-II aminoacyl-tRNA synthetase family. Zn(2+) serves as cofactor.

The protein resides in the cytoplasm. It carries out the reaction tRNA(Ala) + L-alanine + ATP = L-alanyl-tRNA(Ala) + AMP + diphosphate. Functionally, catalyzes the attachment of alanine to tRNA(Ala) in a two-step reaction: alanine is first activated by ATP to form Ala-AMP and then transferred to the acceptor end of tRNA(Ala). Also edits incorrectly charged Ser-tRNA(Ala) and Gly-tRNA(Ala) via its editing domain. This is Alanine--tRNA ligase from Methanococcus maripaludis (strain C7 / ATCC BAA-1331).